The primary structure comprises 490 residues: MRRHDPIVAIASAAGRGAIGIVRVSGNALGALAQALCGRALQPRMATYLAFRDARGQPIDQGLALYFPGPHSYTGEDVLELQAHGGPVVLQLLLARCLEAGAGADPATGRPCLPGLRLAQPGEFTERAFLNDKIDLAQAEAIADLIDASTEAAARSASRSLSGAFSAGIHGLCDALIALRTLVEASLDFPEEETDFLHQADARGQLSRLRQALGAVLQQARQGALLRDGIEVVIAGQPNAGKSSLLNALAGAELAIVTPVAGTTRDKVQQTIQIEGVPLRIIDTAGLRASDDEVERIGIARSWEAMAAADAVLFLHDLARAQTPKYIADDAEIERALARKLPPGVAVIDVWNKLDCVAAPAELAAPTAPTESAAVPPASARPAPAPRPAVQLSARTGQGLDGLRRILLEVAGWQSVPEGICIARARHVQALQMAAAHLEQAADQLQARGAALELLAEELRLAQNALDSITGAFTSDDLLGAIFARFCIGK.

R23, E80, and K133 together coordinate (6S)-5-formyl-5,6,7,8-tetrahydrofolate. Positions 229–412 (GIEVVIAGQP…LRRILLEVAG (184 aa)) constitute a TrmE-type G domain. K(+) is bound at residue N239. GTP is bound by residues 239–244 (NAGKSS), 258–264 (TPVAGTT), and 283–286 (DTAG). S243 is a Mg(2+) binding site. 3 residues coordinate K(+): T258, V260, and T263. A Mg(2+)-binding site is contributed by T264. Low complexity predominate over residues 366–382 (PTAPTESAAVPPASARP). Residues 366-388 (PTAPTESAAVPPASARPAPAPRP) are disordered. Position 393-395 (393-395 (SAR)) interacts with GTP. K490 lines the (6S)-5-formyl-5,6,7,8-tetrahydrofolate pocket.

Belongs to the TRAFAC class TrmE-Era-EngA-EngB-Septin-like GTPase superfamily. TrmE GTPase family. Homodimer. Heterotetramer of two MnmE and two MnmG subunits. K(+) is required as a cofactor.

It localises to the cytoplasm. Exhibits a very high intrinsic GTPase hydrolysis rate. Involved in the addition of a carboxymethylaminomethyl (cmnm) group at the wobble position (U34) of certain tRNAs, forming tRNA-cmnm(5)s(2)U34. This is tRNA modification GTPase MnmE from Verminephrobacter eiseniae (strain EF01-2).